The following is a 146-amino-acid chain: Snaclec agkicetin-C subunit beta (146 aa).

The N-terminal stretch at 1–23 (MGRFIFVSFGLLVVFLSLSGTGA) is a signal peptide. Disulfide bonds link cysteine 25-cysteine 36, cysteine 53-cysteine 142, and cysteine 119-cysteine 134. In terms of domain architecture, C-type lectin spans 32-143 (YEGNCYLVVK…CSRTQPFVCK (112 aa)).

This sequence belongs to the snaclec family. As to quaternary structure, heterodimer of subunits alpha and beta; disulfide-linked. As to expression, expressed by the venom gland.

The protein resides in the secreted. Is a potent glycoprotein Ibalpha (GP1BA) antagonist. Concentration-dependently inhibits botrocetin-, ristocetin- and low dose thrombin-induced platelet aggregation. Inhibits platelet adhesion only through inhibiting the vWF interaction with GP1BA, but has minimal effect on other platelet receptors, such as alpha-IIb/beta-3 (ITGA2B/ITGB3) or alpha-2/beta-1 (ITGA2/ITGB1). Causes an instant severe thrombocytopenia in rats and is not lethal to mice. In Deinagkistrodon acutus (Hundred-pace snake), this protein is Snaclec agkicetin-C subunit beta.